Here is a 315-residue protein sequence, read N- to C-terminus: KH domain-containing protein At5g56140 (315 aa).

2 disordered regions span residues 1–53 (MMMM…GGLR) and 136–158 (SQFP…SPGS). Residues 7-28 (LGGGGGGGGGSGGGIGGGGGGR) are compositionally biased toward gly residues. Polar residues-rich tracts occupy residues 31 to 53 (TYSS…GGLR) and 136 to 146 (SQFPSERSVPS). Residues 171–238 (DIPVDNYPNF…EHLNEPLHIL (68 aa)) enclose the KH domain. The segment at 289 to 315 (REEGSPMSGSVSPYNSLGMKRAKTREG) is disordered. Serine 300 is subject to Phosphoserine.

The protein resides in the nucleus. This Arabidopsis thaliana (Mouse-ear cress) protein is KH domain-containing protein At5g56140.